Consider the following 224-residue polypeptide: Probable Brix domain-containing ribosomal biogenesis protein (224 aa).

The Brix domain occupies 1 to 196 (MMLITTSHRP…IWIMEDGRRW (196 aa)).

Its function is as follows. Probably involved in the biogenesis of the ribosome. This Pyrococcus horikoshii (strain ATCC 700860 / DSM 12428 / JCM 9974 / NBRC 100139 / OT-3) protein is Probable Brix domain-containing ribosomal biogenesis protein.